The chain runs to 284 residues: 2-dehydro-3-deoxyphosphooctonate aldolase (284 aa).

It belongs to the KdsA family.

It localises to the cytoplasm. It catalyses the reaction D-arabinose 5-phosphate + phosphoenolpyruvate + H2O = 3-deoxy-alpha-D-manno-2-octulosonate-8-phosphate + phosphate. It participates in carbohydrate biosynthesis; 3-deoxy-D-manno-octulosonate biosynthesis; 3-deoxy-D-manno-octulosonate from D-ribulose 5-phosphate: step 2/3. Its pathway is bacterial outer membrane biogenesis; lipopolysaccharide biosynthesis. This is 2-dehydro-3-deoxyphosphooctonate aldolase from Burkholderia orbicola (strain MC0-3).